We begin with the raw amino-acid sequence, 295 residues long: Small ribosomal subunit protein uS2 (295 aa).

The interval Ala242–Gly295 is disordered. Residues Glu264 to Ala288 show a composition bias toward low complexity.

It belongs to the universal ribosomal protein uS2 family.

This is Small ribosomal subunit protein uS2 from Phenylobacterium zucineum (strain HLK1).